The chain runs to 360 residues: Ferrochelatase (360 aa).

H210 and E291 together coordinate Fe cation.

The protein belongs to the ferrochelatase family.

The protein resides in the cytoplasm. The enzyme catalyses heme b + 2 H(+) = protoporphyrin IX + Fe(2+). Its pathway is porphyrin-containing compound metabolism; protoheme biosynthesis; protoheme from protoporphyrin-IX: step 1/1. Its function is as follows. Catalyzes the ferrous insertion into protoporphyrin IX. The sequence is that of Ferrochelatase from Pseudoalteromonas atlantica (strain T6c / ATCC BAA-1087).